Consider the following 2422-residue polypeptide: Interferon-induced very large GTPase 1 (2422 aa).

The disordered stretch occupies residues 945–965 (ENFFEDSDSPTKSSSTEPSPH). The span at 954 to 963 (PTKSSSTEPS) shows a compositional bias: low complexity. Residues 1479–1720 (DKRLFVLSIL…KISDVKSRVQ (242 aa)) enclose the VLIG-type G domain. Residues 1489 to 1496 (GLQSSGKS), 1542 to 1545 (DTEG), and 1619 to 1622 (TATD) each bind GTP.

Belongs to the TRAFAC class dynamin-like GTPase superfamily. Very large inducible GTPase (VLIG) family.

It localises to the cytoplasm. It is found in the cytosol. The protein resides in the nucleus. The polypeptide is Interferon-induced very large GTPase 1 (GVINP1) (Homo sapiens (Human)).